The chain runs to 303 residues: Putative HTH-type transcriptional regulatory protein Mpal_0031 (303 aa).

An HTH cro/C1-type domain is found at 132 to 189 (LRGLREQRNMSLGDLGAVLGVSRRTISKYESGMGTTLEIAIKIEEVFDSGVIESIDLL). The H-T-H motif DNA-binding region spans 143–162 (LGDLGAVLGVSRRTISKYES).

The protein is Putative HTH-type transcriptional regulatory protein Mpal_0031 of Methanosphaerula palustris (strain ATCC BAA-1556 / DSM 19958 / E1-9c).